A 108-amino-acid polypeptide reads, in one-letter code: Nucleoid-associated protein Rmet_2128 (108 aa).

Residues 86–96 (TTQEKMGSMTS) show a composition bias toward polar residues. The interval 86–108 (TTQEKMGSMTSGLPLPPGFKLPF) is disordered. Residues 99–108 (PLPPGFKLPF) are compositionally biased toward pro residues.

This sequence belongs to the YbaB/EbfC family. In terms of assembly, homodimer.

It is found in the cytoplasm. The protein localises to the nucleoid. Its function is as follows. Binds to DNA and alters its conformation. May be involved in regulation of gene expression, nucleoid organization and DNA protection. This chain is Nucleoid-associated protein Rmet_2128, found in Cupriavidus metallidurans (strain ATCC 43123 / DSM 2839 / NBRC 102507 / CH34) (Ralstonia metallidurans).